Consider the following 1687-residue polypeptide: Vitellogenin-2 (1687 aa).

Residues 1 to 15 (MRVLVLALTVALVAG) form the signal peptide. A Vitellogenin domain is found at 24 to 663 (FAPGKTYEYK…DAATVLPKNI (640 aa)). N-linked (GlcNAc...) asparagine glycosylation is found at asparagine 941, asparagine 945, asparagine 954, asparagine 1004, asparagine 1019, and asparagine 1083. Residues 1081-1174 (LKNSTKASSS…SSSSSKTKWQ (94 aa)) form a disordered region. Low complexity predominate over residues 1088–1127 (SSSSSGSSRSSRSRSSSSSSSSSSSSSSRSSSSSSRSSSS). An N-linked (GlcNAc...) asparagine glycan is attached at asparagine 1142. Residues 1148 to 1169 (SSSSSSSSSSSSSSSSSSSSSS) are compositionally biased toward low complexity. Residues asparagine 1179, asparagine 1257, asparagine 1292, asparagine 1342, asparagine 1361, asparagine 1366, and asparagine 1390 are each glycosylated (N-linked (GlcNAc...) asparagine). The VWFD domain maps to 1417–1593 (AECTVVEDTV…SWVLPAKSCR (177 aa)). Intrachain disulfides connect cysteine 1419–cysteine 1556 and cysteine 1442–cysteine 1592. Asparagine 1577 and asparagine 1655 each carry an N-linked (GlcNAc...) asparagine glycan.

Post-translationally, phosvitin, an egg yolk storage protein, is one of the most highly phosphorylated (10%) proteins in nature. Produced by the liver, secreted into the blood and then sequestered by receptor mediated endocytosis into growing oocytes, where it is generally cleaved, giving rise to the respective yolk components lipovitellins and phosvitin.

Precursor of the egg-yolk proteins that are sources of nutrients during early development of oviparous organisms. The chain is Vitellogenin-2 from Fundulus heteroclitus (Killifish).